Reading from the N-terminus, the 77-residue chain is MKNYSKNATHLITVLLFSFVVILLIIPSKCEAVSNDMQPLEARSADLIPEPRYIIDVPPRCPPGSKFIKNRCRVIVP.

Residues 1-32 (MKNYSKNATHLITVLLFSFVVILLIIPSKCEA) form the signal peptide. A propeptide spanning residues 33–52 (VSNDMQPLEARSADLIPEPR) is cleaved from the precursor. Cys-61 and Cys-72 are joined by a disulfide.

This sequence belongs to the secapin family. In terms of tissue distribution, expressed by the venom gland.

The protein localises to the secreted. Nontoxic peptide. This is Secapin from Vespa velutina nigrithorax (Hornet).